The sequence spans 217 residues: Formate dehydrogenase, nitrate-inducible, cytochrome b556(Fdn) subunit (217 aa).

The Cytoplasmic segment spans residues 1–11 (MSKSKMIVRTK). Residues 12 to 36 (FIDRACHWTVVICFFLVALSGISFF) form a helical membrane-spanning segment. Residue H18 coordinates heme b. The Periplasmic portion of the chain corresponds to 37–52 (FPTLQWLTQTFGTPQM). Residues 53–74 (GRILHPFFGIAIFVALMFMFVR) form a helical membrane-spanning segment. A heme b-binding site is contributed by H57. Topologically, residues 75–110 (FVHHNIPDKKDIPWLLNIVEVLKGNEHKVADVGKYN) are cytoplasmic. Residues 111–134 (AGQKMMFWSIMSMIFVLLVTGVII) form a helical membrane-spanning segment. Residues 135–150 (WRPYFAQYFPMQVVRY) lie on the Periplasmic side of the membrane. A helical membrane pass occupies residues 151 to 175 (SLLIHAAAGIILIHAILIHMYMAFW). Heme b-binding residues include H155 and H169. H169 contributes to the a menaquinone binding site. The Cytoplasmic portion of the chain corresponds to 176–217 (VKGSIKGMIEGKVSRRWAKKHHPRWYREIEKAEAKKESEEGI).

The protein belongs to the formate dehydrogenase gamma subunit family. As to quaternary structure, trimer of heterotrimers, consisting of subunits alpha, beta and gamma. Heme serves as cofactor.

Its subcellular location is the cell inner membrane. Formate dehydrogenase allows the bacterium to use formate as major electron donor during anaerobic respiration, when nitrate is used as electron acceptor. Subunit gamma is the cytochrome b556 component of the formate dehydrogenase-N, and also contains a menaquinone reduction site that receives electrons from the beta subunit (FdnH), through its hemes. Formate dehydrogenase-N is part of a system that generates proton motive force, together with the dissimilatory nitrate reductase (Nar). The protein is Formate dehydrogenase, nitrate-inducible, cytochrome b556(Fdn) subunit (fdnI) of Escherichia coli O157:H7.